We begin with the raw amino-acid sequence, 246 residues long: Exosome complex component Rrp41 (246 aa).

It belongs to the RNase PH family. Rrp41 subfamily. In terms of assembly, component of the archaeal exosome complex. Forms a hexameric ring-like arrangement composed of 3 Rrp41-Rrp42 heterodimers. The hexameric ring associates with a trimer of Rrp4 and/or Csl4 subunits.

It localises to the cytoplasm. In terms of biological role, catalytic component of the exosome, which is a complex involved in RNA degradation. Has 3'-&gt;5' exoribonuclease activity. Can also synthesize heteromeric RNA-tails. The sequence is that of Exosome complex component Rrp41 from Pyrobaculum neutrophilum (strain DSM 2338 / JCM 9278 / NBRC 100436 / V24Sta) (Thermoproteus neutrophilus).